Reading from the N-terminus, the 927-residue chain is UPF0182 protein bll7333 (927 aa).

Helical transmembrane passes span 17–37, 65–85, 134–154, 185–205, 220–240, 264–284, and 297–317; these read AVVGLIIAALVIAIVLTLLAL, AVVFLAVWTATAVILLLNGWL, LALLVAAAEAGNWGVFLQFVY, WMMLALALSALFAAAIYLVHG, VIAHGSALLGLLFAVKAWSFG, VGLPALWLMIGLSGIAALAAW, and AAFLLVAIGSFVLSGLVPVLF.

It belongs to the UPF0182 family.

The protein resides in the cell membrane. This chain is UPF0182 protein bll7333, found in Bradyrhizobium diazoefficiens (strain JCM 10833 / BCRC 13528 / IAM 13628 / NBRC 14792 / USDA 110).